Reading from the N-terminus, the 184-residue chain is ATP synthase subunit delta (184 aa).

This sequence belongs to the ATPase delta chain family. F-type ATPases have 2 components, F(1) - the catalytic core - and F(0) - the membrane proton channel. F(1) has five subunits: alpha(3), beta(3), gamma(1), delta(1), epsilon(1). F(0) has three main subunits: a(1), b(2) and c(10-14). The alpha and beta chains form an alternating ring which encloses part of the gamma chain. F(1) is attached to F(0) by a central stalk formed by the gamma and epsilon chains, while a peripheral stalk is formed by the delta and b chains.

The protein resides in the cell inner membrane. Its function is as follows. F(1)F(0) ATP synthase produces ATP from ADP in the presence of a proton or sodium gradient. F-type ATPases consist of two structural domains, F(1) containing the extramembraneous catalytic core and F(0) containing the membrane proton channel, linked together by a central stalk and a peripheral stalk. During catalysis, ATP synthesis in the catalytic domain of F(1) is coupled via a rotary mechanism of the central stalk subunits to proton translocation. This protein is part of the stalk that links CF(0) to CF(1). It either transmits conformational changes from CF(0) to CF(1) or is implicated in proton conduction. This chain is ATP synthase subunit delta, found in Dichelobacter nodosus (strain VCS1703A).